We begin with the raw amino-acid sequence, 175 residues long: Adenine phosphoribosyltransferase (175 aa).

The protein belongs to the purine/pyrimidine phosphoribosyltransferase family. Homodimer.

The protein localises to the cytoplasm. It catalyses the reaction AMP + diphosphate = 5-phospho-alpha-D-ribose 1-diphosphate + adenine. The protein operates within purine metabolism; AMP biosynthesis via salvage pathway; AMP from adenine: step 1/1. Its function is as follows. Catalyzes a salvage reaction resulting in the formation of AMP, that is energically less costly than de novo synthesis. The protein is Adenine phosphoribosyltransferase of Oenococcus oeni (strain ATCC BAA-331 / PSU-1).